Here is a 338-residue protein sequence, read N- to C-terminus: tRNA-specific 2-thiouridylase MnmA (338 aa).

ATP contacts are provided by residues 6–13 (AMSGGVDS) and methionine 32. The active-site Nucleophile is cysteine 92. Cysteines 92 and 186 form a disulfide. Glycine 116 lines the ATP pocket. The tract at residues 134-136 (KDQ) is interaction with tRNA. Cysteine 186 (cysteine persulfide intermediate) is an active-site residue. Residues 288-289 (RY) form an interaction with tRNA region.

The protein belongs to the MnmA/TRMU family.

It is found in the cytoplasm. It catalyses the reaction S-sulfanyl-L-cysteinyl-[protein] + uridine(34) in tRNA + AH2 + ATP = 2-thiouridine(34) in tRNA + L-cysteinyl-[protein] + A + AMP + diphosphate + H(+). Functionally, catalyzes the 2-thiolation of uridine at the wobble position (U34) of tRNA, leading to the formation of s(2)U34. The protein is tRNA-specific 2-thiouridylase MnmA of Campylobacter lari (strain RM2100 / D67 / ATCC BAA-1060).